The chain runs to 212 residues: ATP phosphoribosyltransferase (212 aa).

This sequence belongs to the ATP phosphoribosyltransferase family. Short subfamily. Heteromultimer composed of HisG and HisZ subunits.

The protein localises to the cytoplasm. It catalyses the reaction 1-(5-phospho-beta-D-ribosyl)-ATP + diphosphate = 5-phospho-alpha-D-ribose 1-diphosphate + ATP. The protein operates within amino-acid biosynthesis; L-histidine biosynthesis; L-histidine from 5-phospho-alpha-D-ribose 1-diphosphate: step 1/9. Its function is as follows. Catalyzes the condensation of ATP and 5-phosphoribose 1-diphosphate to form N'-(5'-phosphoribosyl)-ATP (PR-ATP). Has a crucial role in the pathway because the rate of histidine biosynthesis seems to be controlled primarily by regulation of HisG enzymatic activity. The polypeptide is ATP phosphoribosyltransferase (Prochlorococcus marinus (strain MIT 9515)).